Consider the following 557-residue polypeptide: Glucose-6-phosphate isomerase (557 aa).

Catalysis depends on Glu-361, which acts as the Proton donor. Active-site residues include His-392 and Lys-520.

The protein belongs to the GPI family.

It is found in the cytoplasm. The enzyme catalyses alpha-D-glucose 6-phosphate = beta-D-fructose 6-phosphate. Its pathway is carbohydrate biosynthesis; gluconeogenesis. It functions in the pathway carbohydrate degradation; glycolysis; D-glyceraldehyde 3-phosphate and glycerone phosphate from D-glucose: step 2/4. In terms of biological role, catalyzes the reversible isomerization of glucose-6-phosphate to fructose-6-phosphate. The sequence is that of Glucose-6-phosphate isomerase from Acinetobacter baylyi (strain ATCC 33305 / BD413 / ADP1).